The sequence spans 444 residues: UDP-N-acetylmuramate--L-alanine ligase (444 aa).

111 to 117 (GAHGKTS) is a binding site for ATP.

This sequence belongs to the MurCDEF family.

The protein resides in the cytoplasm. It catalyses the reaction UDP-N-acetyl-alpha-D-muramate + L-alanine + ATP = UDP-N-acetyl-alpha-D-muramoyl-L-alanine + ADP + phosphate + H(+). The protein operates within cell wall biogenesis; peptidoglycan biosynthesis. In terms of biological role, cell wall formation. This is UDP-N-acetylmuramate--L-alanine ligase from Leuconostoc citreum (strain KM20).